A 505-amino-acid polypeptide reads, in one-letter code: uncharacterized protein (505 aa).

The first 19 residues, 1 to 19 (MILFTAIILVASVVHVVVS), serve as a signal peptide directing secretion. Topologically, residues 20–483 (SPQQCYYCVE…EQPNSAPRGE (464 aa)) are extracellular. A helical membrane pass occupies residues 484 to 504 (IHQLFRCTFVAVFIVFACFIV). Residue Cys-505 is a topological domain, cytoplasmic.

In terms of tissue distribution, component of the acid-insoluble and acid-soluble organic matrix of the aragonitic skeleton (at protein level).

Its subcellular location is the membrane. This is an uncharacterized protein from Acropora millepora (Staghorn coral).